A 228-amino-acid chain; its full sequence is Ribose-5-phosphate isomerase A (228 aa).

Substrate is bound by residues Thr32–Thr35, Asp85–Asp88, and Lys98–Gly101. The active-site Proton acceptor is the Glu107. Lys125 contributes to the substrate binding site.

This sequence belongs to the ribose 5-phosphate isomerase family. As to quaternary structure, homodimer.

It catalyses the reaction aldehydo-D-ribose 5-phosphate = D-ribulose 5-phosphate. It functions in the pathway carbohydrate degradation; pentose phosphate pathway; D-ribose 5-phosphate from D-ribulose 5-phosphate (non-oxidative stage): step 1/1. In terms of biological role, catalyzes the reversible conversion of ribose-5-phosphate to ribulose 5-phosphate. In Ralstonia pickettii (strain 12J), this protein is Ribose-5-phosphate isomerase A.